The following is a 76-amino-acid chain: Theta defensin subunit A (76 aa).

An N-terminal signal peptide occupies residues 1-22 (MRTFALLTAMLLLVALHAQAEA). The propeptide occupies 23-64 (RQARADEAAAQQQPGADDQGMAHSFTWPENAALPLSESAKGL). Residues 25–45 (ARADEAAAQQQPGADDQGMAH) are disordered. Positions 30–44 (AAAQQQPGADDQGMA) are enriched in low complexity. A Cyclopeptide (Arg-Cys) (interchain with C-73 in subunit A); in form BTD-3 cross-link involves residue R65. A Cyclopeptide (Arg-Cys) (interchain with C-73 in subunit B); in form BTD-1 cross-link involves residue R65. A Cyclopeptide (Arg-Cys) (interchain with C-73 in subunit C); in form BTD-4 cross-link involves residue R65. R65 is covalently cross-linked (Cyclopeptide (Arg-Cys) (interchain with C-73 in subunit D); in form BTD-7). A disulfide bond links C68 and C73. A Cyclopeptide (Cys-Arg) (interchain with R-65 in subunit A); in form BTD-3 cross-link involves residue C73. Residue C73 forms a Cyclopeptide (Cys-Arg) (interchain with R-65 in subunit B); in form BTD-1 linkage. C73 is covalently cross-linked (Cyclopeptide (Cys-Arg) (interchain with R-65 in subunit C); in form BTD-4). C73 is covalently cross-linked (Cyclopeptide (Cys-Arg) (interchain with R-65 in subunit D); in form BTD-7). Residues 74-76 (RLL) constitute a propeptide that is removed on maturation.

It belongs to the alpha-defensin family. Theta subfamily. BTD-1 is a cyclic heterodimer composed of subunits A and B; disulfide-linked. BTD-3 is a cyclic homodimer composed of two subunits A; disulfide-linked. BTD-4 is a cyclic heterodimer composed of subunits A and C; disulfide-linked. BTD-7 is a cyclic heterodimer composed of subunits A and D; disulfide-linked. Post-translationally, forms a cyclic peptide with subunit B (BTD-1), subunit A (BTD-3), subunit C (BTD-4), or subunit D (BTD-7). An additional intersubunit disulfide bond is formed.

BTD-1, BTD-3, BTD-4 and BTD-7 have antimicrobial activity against the Gram-negative bacterium E.coli ML35, the Gram-positive bacterium S.aureus 502a, and the fungus C.albicans 16820. BTD-3 is more effective against E.coli than BTD-1, BTD-4 and BTD-7. The chain is Theta defensin subunit A (BTDA) from Papio anubis (Olive baboon).